The chain runs to 718 residues: ADP-ribosylation factor-binding protein GGA3 (718 aa).

The VHS domain occupies 16–146 (ATNPSNRQED…MLKRQGIVQS (131 aa)). Phosphoserine occurs at positions 159 and 275. The GAT domain occupies 171–298 (DEEKSKLLAR…VINSYKTIIE (128 aa)). A unstructured hinge region spans residues 299-588 (GQIVNGEVTT…VHVPLESIKP (290 aa)). Low complexity-rich tracts occupy residues 334–350 (APSN…SGIP) and 360–369 (GPPRSRSSSQ). Residues 334–381 (APSNSSPALAPPTSGIPILPPPPQTSGPPRSRSSSQAEAPPGSDSTNN) form a disordered region. The Autoinhibitory motif lies at 387–391 (DEELL). 2 disordered regions span residues 395-455 (LTDP…MSQA) and 477-506 (SFMF…STSH). One can recognise a GAE domain in the interval 589-710 (SSALPVTAYD…TELGEVDQFP (122 aa)).

The protein belongs to the GGA protein family. Monomer. Interacts with GGA1 and GGA2. Binds to clathrin and activated ARFs, such as ARF1, ARF5 and ARF6. Binds RABEP1 and RABGEF1. Interacts with the membrane proteins M6PR/CD-MPR and IGF2R/CI-MPR and the accessory proteins SYNRG, EPN4, NECAP1, NECAP2 and AFTPH/aftiphilin. Interacts with TSG101 and UBC. Interacts with ADRA2B. Interacts with NTRK1; the interaction is independent of NTRK1 activation and ubiquitination. Interacts (via VHS domain) with BACE1 (via DXXLL motif). In terms of processing, phosphorylated by CK2 and dephosphorylated by PP2A. Phosphorylation of GGA3 allows the internal DXXLL motif to bind the VHS domain and to inhibit the recognition of cargo signals. Ubiquitinated. Post-translationally, proteolytically cleaved during apoptosis by CASP3.

It localises to the golgi apparatus. The protein localises to the trans-Golgi network membrane. It is found in the endosome membrane. The protein resides in the early endosome membrane. Its subcellular location is the recycling endosome membrane. Plays a role in protein sorting and trafficking between the trans-Golgi network (TGN) and endosomes. Mediates the ARF-dependent recruitment of clathrin to the TGN and binds ubiquitinated proteins and membrane cargo molecules with a cytosolic acidic cluster-dileucine (DXXLL) motif. Its function is as follows. Plays a role in protein sorting and trafficking between the trans-Golgi network (TGN) and endosomes. Mediates the ARF-dependent recruitment of clathrin to the TGN and binds ubiquitinated proteins and membrane cargo molecules with a cytosolic acidic cluster-dileucine (DXXLL) motif. Mediates export of the GPCR receptor ADRA2B to the cell surface. Involved in BACE1 transport and sorting as well as regulation of BACE1 protein levels. Regulates retrograde transport of BACE1 from endosomes to the trans-Golgi network via interaction through the VHS motif and dependent of BACE1 phosphorylation. Modulates BACE1 protein levels independently of the interaction between VHS domain and DXXLL motif through recognition of ubiquitination. Key player in a novel DXXLL-mediated endosomal sorting machinery to the recycling pathway that targets NTRK1 to the plasma membrane. The polypeptide is ADP-ribosylation factor-binding protein GGA3 (Gga3) (Mus musculus (Mouse)).